Reading from the N-terminus, the 434-residue chain is Cysteine--tRNA ligase (434 aa).

A Zn(2+)-binding site is contributed by cysteine 28. Positions 30–40 (PTVYDDIHIGN) match the 'HIGH' region motif. Zn(2+) is bound by residues cysteine 207, histidine 232, and glutamate 236. The short motif at 264-268 (KMSKS) is the 'KMSKS' region element. Lysine 267 serves as a coordination point for ATP.

This sequence belongs to the class-I aminoacyl-tRNA synthetase family. Monomer. Zn(2+) serves as cofactor.

The protein resides in the cytoplasm. The catalysed reaction is tRNA(Cys) + L-cysteine + ATP = L-cysteinyl-tRNA(Cys) + AMP + diphosphate. In Acholeplasma laidlawii (strain PG-8A), this protein is Cysteine--tRNA ligase.